The following is a 345-amino-acid chain: N(4)-(Beta-N-acetylglucosaminyl)-L-asparaginase (345 aa).

Positions 1-23 (MARKWNLPFLLLPLVLGIPLVRG) are cleaved as a signal peptide. N-linked (GlcNAc...) asparagine glycosylation is present at Asn38. Residues Cys64 and Cys69 are joined by a disulfide bond. Asn149 carries an N-linked (GlcNAc...) asparagine glycan. The cysteines at positions 163 and 179 are disulfide-linked. The Nucleophile role is filled by Thr205. Substrate-binding positions include 233-236 (RVGD) and 256-259 (TGDG). A disulfide bridge links Cys285 with Cys305. Asn307 carries N-linked (GlcNAc...) asparagine glycosylation. Cys316 and Cys344 form a disulfide bridge.

Belongs to the Ntn-hydrolase family. In terms of assembly, heterotetramer of two alpha and two beta chains arranged as a dimer of alpha/beta heterodimers. Post-translationally, N-glycosylated. Cleaved into an alpha and beta chain by autocatalysis; this activates the enzyme. The N-terminal residue of the beta subunit is responsible for the nucleophile hydrolase activity.

It localises to the lysosome. The enzyme catalyses N(4)-(beta-N-acetyl-D-glucosaminyl)-L-asparagine + H2O = N-acetyl-beta-D-glucosaminylamine + L-aspartate + H(+). Functionally, cleaves the GlcNAc-Asn bond which joins oligosaccharides to the peptide of asparagine-linked glycoproteins. The sequence is that of N(4)-(Beta-N-acetylglucosaminyl)-L-asparaginase (Aga) from Rattus norvegicus (Rat).